Reading from the N-terminus, the 153-residue chain is Interleukin-4 (153 aa).

The N-terminal stretch at 1 to 24 is a signal peptide; the sequence is MGLTSQLLPPLFFLLACAGNFVHG. 3 cysteine pairs are disulfide-bonded: Cys27-Cys151, Cys48-Cys89, and Cys70-Cys123. Asn62 carries an N-linked (GlcNAc...) asparagine glycan.

It belongs to the IL-4/IL-13 family. As to quaternary structure, interacts with IL4R. Interacts with IL13RA1.

The protein resides in the secreted. Its function is as follows. Cytokine secreted primarily by mast cells, T-cells, eosinophils, and basophils that plays a role in regulating antibody production, hematopoiesis and inflammation, and the development of effector T-cell responses. Induces the expression of class II MHC molecules on resting B-cells. Enhances both secretion and cell surface expression of IgE and IgG1. Also regulates the expression of the low affinity Fc receptor for IgE (CD23) on both lymphocytes and monocytes. Positively regulates IL31RA expression in macrophages. Stimulates autophagy in dendritic cells by interfering with mTORC1 signaling and through the induction of RUFY4. In addition, plays a critical role in higher functions of the normal brain, such as memory and learning. Upon binding to IL4, IL4R receptor dimerizes either with the common IL2R gamma chain/IL2RG to produce the type 1 signaling complex, located mainly on hematopoietic cells, or with the IL13RA1 to produce the type 2 complex, which is also expressed on nonhematopoietic cells. Engagement of both types of receptors initiates JAK3 and to a lower extend JAK1 phosphorylation leading to activation of the signal transducer and activator of transcription 6/STAT6. This is Interleukin-4 (IL4) from Homo sapiens (Human).